We begin with the raw amino-acid sequence, 31 residues long: Conotoxin Cltx-2 (31 aa).

Proline 6 and proline 31 each carry 4-hydroxyproline.

Post-translationally, contains 4 disulfide bonds. Expressed by the venom duct.

It localises to the secreted. This is Conotoxin Cltx-2 from Californiconus californicus (California cone).